A 116-amino-acid chain; its full sequence is Large ribosomal subunit protein bL19 (116 aa).

The protein belongs to the bacterial ribosomal protein bL19 family.

Functionally, this protein is located at the 30S-50S ribosomal subunit interface and may play a role in the structure and function of the aminoacyl-tRNA binding site. In Pseudomonas putida (strain W619), this protein is Large ribosomal subunit protein bL19.